Consider the following 291-residue polypeptide: ATP synthase gamma chain (291 aa).

Belongs to the ATPase gamma chain family. As to quaternary structure, F-type ATPases have 2 components, CF(1) - the catalytic core - and CF(0) - the membrane proton channel. CF(1) has five subunits: alpha(3), beta(3), gamma(1), delta(1), epsilon(1). CF(0) has three main subunits: a, b and c.

Its subcellular location is the cell membrane. In terms of biological role, produces ATP from ADP in the presence of a proton gradient across the membrane. The gamma chain is believed to be important in regulating ATPase activity and the flow of protons through the CF(0) complex. This chain is ATP synthase gamma chain, found in Buchnera aphidicola subsp. Schizaphis graminum (strain Sg).